Consider the following 372-residue polypeptide: Dual-specificity RNA methyltransferase RlmN (372 aa).

The active-site Proton acceptor is Glu94. The Radical SAM core domain occupies 100–339 (DGDRATLCVS…VTIRKTRGDD (240 aa)). Cys107 and Cys344 are oxidised to a cystine. Residues Cys114, Cys118, and Cys121 each contribute to the [4Fe-4S] cluster site. Residues 168-169 (GE), Ser200, 222-224 (SLH), and Asn301 contribute to the S-adenosyl-L-methionine site. The S-methylcysteine intermediate role is filled by Cys344.

It belongs to the radical SAM superfamily. RlmN family. Requires [4Fe-4S] cluster as cofactor.

The protein resides in the cytoplasm. The catalysed reaction is adenosine(2503) in 23S rRNA + 2 reduced [2Fe-2S]-[ferredoxin] + 2 S-adenosyl-L-methionine = 2-methyladenosine(2503) in 23S rRNA + 5'-deoxyadenosine + L-methionine + 2 oxidized [2Fe-2S]-[ferredoxin] + S-adenosyl-L-homocysteine. It carries out the reaction adenosine(37) in tRNA + 2 reduced [2Fe-2S]-[ferredoxin] + 2 S-adenosyl-L-methionine = 2-methyladenosine(37) in tRNA + 5'-deoxyadenosine + L-methionine + 2 oxidized [2Fe-2S]-[ferredoxin] + S-adenosyl-L-homocysteine. Functionally, specifically methylates position 2 of adenine 2503 in 23S rRNA and position 2 of adenine 37 in tRNAs. m2A2503 modification seems to play a crucial role in the proofreading step occurring at the peptidyl transferase center and thus would serve to optimize ribosomal fidelity. The polypeptide is Dual-specificity RNA methyltransferase RlmN (Aliivibrio fischeri (strain ATCC 700601 / ES114) (Vibrio fischeri)).